Consider the following 48-residue polypeptide: Small, acid-soluble spore protein O (48 aa).

Positions 1 to 23 (MTKRKANHVINGMNAAKSQGNGA) are disordered.

It belongs to the SspO family.

It localises to the spore core. This is Small, acid-soluble spore protein O from Bacillus pumilus (strain SAFR-032).